The chain runs to 46 residues: MSKLLVLLMTTALATLAQAISFDCSDKPPECQNDPGCCFDIGITTF.

A signal peptide spans 1–19 (MSKLLVLLMTTALATLAQA).

It belongs to the limacoditoxin-6 family. Expressed by the venom secretory cell of the spine. The spine is a cuticular structure containing a single large nucleated venom-secreting cell at its base. It is an independent unit capable of producing, storing and injecting venom. On the back of D.vulnerans caterpillars, spines are grouped together by 50 to 100 to form scoli, of which there are eight in D.vulnerans.

It localises to the secreted. In terms of biological role, probable toxin. Does not show insecticidal, antimicrobial and antiparasitic activities. Does not induce increase in intracellular calcium in mouse DRG neurons, suggesting that it does not induce pain. The chain is U-limacoditoxin(6)-Dv61 from Doratifera vulnerans (Mottled cup moth).